The following is a 602-amino-acid chain: Translation factor GUF1 homolog, organellar chromatophore (602 aa).

The region spanning 7-189 is the tr-type G domain; sequence SRIRNFCIIA…AIVERIPPPV (183 aa). GTP-binding positions include 16-23, 82-86, and 136-139; these read AHIDHGKS, DTPGH, and NKID.

Belongs to the TRAFAC class translation factor GTPase superfamily. Classic translation factor GTPase family. LepA subfamily.

It is found in the plastid. The protein localises to the organellar chromatophore. It carries out the reaction GTP + H2O = GDP + phosphate + H(+). Its function is as follows. Promotes protein synthesis. May act as a fidelity factor of the translation reaction, by catalyzing a one-codon backward translocation of tRNAs on improperly translocated ribosomes. The chain is Translation factor GUF1 homolog, organellar chromatophore from Paulinella chromatophora.